We begin with the raw amino-acid sequence, 155 residues long: Sperm microtubule associated protein 1 (155 aa).

The sequence is that of Sperm microtubule associated protein 1 (Spmap1) from Mus musculus (Mouse).